The following is a 285-amino-acid chain: 4-diphosphocytidyl-2-C-methyl-D-erythritol kinase (285 aa).

The active site involves lysine 28. 109–119 is a binding site for ATP; sequence PVAAGLGGGSA. Aspartate 148 is a catalytic residue.

The protein belongs to the GHMP kinase family. IspE subfamily.

It catalyses the reaction 4-CDP-2-C-methyl-D-erythritol + ATP = 4-CDP-2-C-methyl-D-erythritol 2-phosphate + ADP + H(+). The protein operates within isoprenoid biosynthesis; isopentenyl diphosphate biosynthesis via DXP pathway; isopentenyl diphosphate from 1-deoxy-D-xylulose 5-phosphate: step 3/6. Functionally, catalyzes the phosphorylation of the position 2 hydroxy group of 4-diphosphocytidyl-2C-methyl-D-erythritol. In Novosphingobium aromaticivorans (strain ATCC 700278 / DSM 12444 / CCUG 56034 / CIP 105152 / NBRC 16084 / F199), this protein is 4-diphosphocytidyl-2-C-methyl-D-erythritol kinase.